Consider the following 315-residue polypeptide: Glutathione synthetase (315 aa).

The ATP-grasp domain occupies 125–310 (KLFTAWFSDL…ITGMLMDAIE (186 aa)). N-beta-linked (GlcNAc) arginine glycosylation occurs at R256. Mg(2+) is bound by residues E281 and N283.

Belongs to the prokaryotic GSH synthase family. Mg(2+) is required as a cofactor. It depends on Mn(2+) as a cofactor. Post-translationally, glycosylation at Arg-256 by NleB enhances the glutathione synthetase activity, leading to an increase in glutathione production. Glycosylation may promote C.rodentium survival in oxidative stress conditions.

It carries out the reaction gamma-L-glutamyl-L-cysteine + glycine + ATP = glutathione + ADP + phosphate + H(+). It participates in sulfur metabolism; glutathione biosynthesis; glutathione from L-cysteine and L-glutamate: step 2/2. The sequence is that of Glutathione synthetase from Citrobacter rodentium.